The primary structure comprises 354 residues: MKFQVVLSALLACSSAVVASPIENLFKYRAVKASHSKNINSTLPAWNGSNSSNVTYANGTNSTTNTTTAESSQLQIIVTGGQVPITNSSLTHTNYTRLFNSSSALNITELYNVARVVNETIQDKSSAGAVVVANAKSLEAVSFFFSIIFDTEKPIVVTEDSAYAIPVANNKNATKRGVLSVTSDKLVYSGVFTPPTACSYGAGLPVAIVDDQDEVKWFFDASKPTLISSDSIIRKEYSNFTTPYGLLENGVPIVPIVYDGGYSSSLIDSLSSAVQGLVVVSSGSTNSTSSTIESTEIPVVYAQANTPLNFIDNKDVPKNAVGAGYLSPIKAQILLSIAAVNGVTSKSALESIFP.

The first 19 residues, 1 to 19 (MKFQVVLSALLACSSAVVA), serve as a signal peptide directing secretion. Residues 20–37 (SPIENLFKYRAVKASHSK) constitute a propeptide that is removed on maturation. N-linked (GlcNAc...) asparagine glycans are attached at residues Asn-40, Asn-50, Asn-53, Asn-58, Asn-61, Asn-65, Asn-87, Asn-94, Asn-100, Asn-106, Asn-118, Asn-172, Asn-239, and Asn-286. The 305-residue stretch at 50–354 (NSSNVTYANG…SKSALESIFP (305 aa)) folds into the Asparaginase/glutaminase domain.

The protein to yeast sporulation-specific protein SPS100. In terms of processing, extensively N-glycosylated.

It is found in the secreted. Its function is as follows. May be involved in cellular adaptations prior to stationary phase. The sequence is that of Protein YGP1 (YGP1) from Saccharomyces cerevisiae (strain ATCC 204508 / S288c) (Baker's yeast).